The chain runs to 367 residues: Peptide chain release factor 2 (367 aa).

Glutamine 254 is modified (N5-methylglutamine).

It belongs to the prokaryotic/mitochondrial release factor family. Methylated by PrmC. Methylation increases the termination efficiency of RF2.

The protein localises to the cytoplasm. Peptide chain release factor 2 directs the termination of translation in response to the peptide chain termination codons UGA and UAA. The protein is Peptide chain release factor 2 of Neisseria meningitidis serogroup C / serotype 2a (strain ATCC 700532 / DSM 15464 / FAM18).